The following is a 440-amino-acid chain: Microtubule-associated tumor suppressor 1 homolog A (440 aa).

Residues 44–67 are disordered; it reads KSRTNSKNPQPPTNGQPDLVPPES. Residues 69–401 are a coiled coil; it reads SRNVEYYKAQ…RLSMENEELL (333 aa). Residues 407 to 440 are disordered; it reads GDLNSPRKISPSPSLNLQSPRTSGMFSSPPVSPR. A compositionally biased stretch (polar residues) spans 417–432; that stretch reads PSPSLNLQSPRTSGMF.

The protein belongs to the MTUS1 family. Homodimer.

Its subcellular location is the mitochondrion. It is found in the golgi apparatus. The protein localises to the cell membrane. It localises to the nucleus. May inhibit cell proliferation. This is Microtubule-associated tumor suppressor 1 homolog A (mtus1a) from Danio rerio (Zebrafish).